A 263-amino-acid chain; its full sequence is MGDKLRLSIGILGNGASLLLYTAPIVTFSRVFKKKSTEEFSCFPYVMTLFNCLIYTWYGLPIVSHLWENLPLVTINGVGILLESIFIFIYFYYASPKEKIKVGVTFVPVIVGFGLTTAISALVFDDHRHRKSFVGSVGLVASISMYGSPLVVMKKVIETRSVEYMPFYLSFFSFLASSLWLAYGLLSHDLFLASPNMVATPLGILQLILYFKYKNKKDLAPTTMVITKRNDHDDKNKATLEFVVDVDRNSDTNEKNSNNASSI.

Residues 1–7 (MGDKLRL) are Extracellular-facing. The helical transmembrane segment at 8–28 (SIGILGNGASLLLYTAPIVTF) threads the bilayer. The 89-residue stretch at 9 to 97 (IGILGNGASL…FIYFYYASPK (89 aa)) folds into the MtN3/slv 1 domain. The Cytoplasmic segment spans residues 29–42 (SRVFKKKSTEEFSC). Residues 43-63 (FPYVMTLFNCLIYTWYGLPIV) form a helical membrane-spanning segment. Residues 64-71 (SHLWENLP) are Extracellular-facing. The helical transmembrane segment at 72 to 92 (LVTINGVGILLESIFIFIYFY) threads the bilayer. The Cytoplasmic segment spans residues 93–103 (YASPKEKIKVG). Residues 104–124 (VTFVPVIVGFGLTTAISALVF) traverse the membrane as a helical segment. At 125–132 (DDHRHRKS) the chain is on the extracellular side. The chain crosses the membrane as a helical span at residues 133–153 (FVGSVGLVASISMYGSPLVVM). Residues 133-217 (FVGSVGLVAS…ILYFKYKNKK (85 aa)) form the MtN3/slv 2 domain. At 154-165 (KKVIETRSVEYM) the chain is on the cytoplasmic side. The chain crosses the membrane as a helical span at residues 166–186 (PFYLSFFSFLASSLWLAYGLL). Residues 187–190 (SHDL) are Extracellular-facing. The helical transmembrane segment at 191-211 (FLASPNMVATPLGILQLILYF) threads the bilayer. At 212-263 (KYKNKKDLAPTTMVITKRNDHDDKNKATLEFVVDVDRNSDTNEKNSNNASSI) the chain is on the cytoplasmic side.

Belongs to the SWEET sugar transporter family. As to quaternary structure, forms heterooligomers with SWEET11, SWEET13 and SWEET17.

It is found in the cell membrane. Its function is as follows. Mediates both low-affinity uptake and efflux of sugar across the plasma membrane. The polypeptide is Bidirectional sugar transporter SWEET3 (Arabidopsis thaliana (Mouse-ear cress)).